Consider the following 226-residue polypeptide: MGPAPRVLELFYDVLSPYSWLGFEVLCRYQHLWNIKLKLRPALLAGIMKDSGNQPPAMVPHKGQYILKEIPLLKQLFQVPMSVPKDFFGEHVKKGTVNAMRFLTAVSMEQPEMLEKVSRELWMRIWSRDEDITESQNILSAAEKAGMATAQAQHLLNKISTELVKSKLRETTGAACKYGAFGLPTTVAHVDGKTYMLFGSDRMELLAYLLGEKWMGPVPPTLNARL.

16-18 (SPY) contacts glutathione. 2 positions are modified to N6-succinyllysine: Lys36 and Lys49. Asn53 contacts glutathione. Residues Lys68 and Lys74 each carry the N6-acetyllysine; alternate modification. N6-succinyllysine; alternate is present on residues Lys68 and Lys74. The residue at position 85 (Lys85) is an N6-acetyllysine. An N6-acetyllysine; alternate mark is found at Lys93 and Lys116. 2 positions are modified to N6-succinyllysine; alternate: Lys93 and Lys116. Lys144 carries the post-translational modification N6-succinyllysine. Lys158 bears the N6-acetyllysine; alternate mark. Position 158 is an N6-succinyllysine; alternate (Lys158). Lys165 is subject to N6-acetyllysine. 2 positions are modified to N6-acetyllysine; alternate: Lys167 and Lys177. An N6-succinyllysine; alternate mark is found at Lys167 and Lys177. Leu183 serves as a coordination point for glutathione. Lys193 is subject to N6-succinyllysine. 200-201 (SD) contributes to the glutathione binding site.

It belongs to the GST superfamily. Kappa family. In terms of assembly, homodimer.

The protein localises to the mitochondrion matrix. It catalyses the reaction RX + glutathione = an S-substituted glutathione + a halide anion + H(+). Its function is as follows. Glutathione S-transferase that catalyzes the conjugation of glutathione to exogenous and endogenous compounds. This chain is Glutathione S-transferase kappa 1 (Gstk1), found in Rattus norvegicus (Rat).